A 617-amino-acid polypeptide reads, in one-letter code: DNA mismatch repair protein MutL (617 aa).

This sequence belongs to the DNA mismatch repair MutL/HexB family.

Its function is as follows. This protein is involved in the repair of mismatches in DNA. It is required for dam-dependent methyl-directed DNA mismatch repair. May act as a 'molecular matchmaker', a protein that promotes the formation of a stable complex between two or more DNA-binding proteins in an ATP-dependent manner without itself being part of a final effector complex. The protein is DNA mismatch repair protein MutL of Bartonella tribocorum (strain CIP 105476 / IBS 506).